The sequence spans 82 residues: Small ribosomal subunit protein eS21z (82 aa).

Residue M1 is modified to N-acetylmethionine.

This sequence belongs to the eukaryotic ribosomal protein eS21 family.

In Arabidopsis thaliana (Mouse-ear cress), this protein is Small ribosomal subunit protein eS21z (RPS21B).